Here is a 515-residue protein sequence, read N- to C-terminus: Putative acetolactate synthase large subunit IlvX (515 aa).

Thiamine diphosphate is bound at residue E48. Residues 249–269 (FAEG…AGAR) and 283–302 (DLVP…GAAD) contribute to the FAD site. Residues 357-436 (TCGVLLPQAT…VTTVIYNNGA (80 aa)) form a thiamine pyrophosphate binding region. Mg(2+) is bound by residues D407 and N434.

It belongs to the TPP enzyme family. Heterodimer of large catalytic subunit and small regulatory subunit. It depends on Mg(2+) as a cofactor. The cofactor is thiamine diphosphate.

It carries out the reaction 2 pyruvate + H(+) = (2S)-2-acetolactate + CO2. It functions in the pathway amino-acid biosynthesis; L-isoleucine biosynthesis; L-isoleucine from 2-oxobutanoate: step 1/4. The protein operates within amino-acid biosynthesis; L-valine biosynthesis; L-valine from pyruvate: step 1/4. In terms of biological role, catalyzes the conversion of 2 pyruvate molecules into acetolactate in the first common step of the biosynthetic pathway of the branched-amino acids such as leucine, isoleucine, and valine. The protein is Putative acetolactate synthase large subunit IlvX (ilvX) of Mycobacterium tuberculosis (strain ATCC 25618 / H37Rv).